The primary structure comprises 202 residues: dTTP/UTP pyrophosphatase (202 aa).

The Proton acceptor role is filled by Asp76.

It belongs to the Maf family. YhdE subfamily. A divalent metal cation serves as cofactor.

The protein resides in the cytoplasm. The catalysed reaction is dTTP + H2O = dTMP + diphosphate + H(+). It catalyses the reaction UTP + H2O = UMP + diphosphate + H(+). Functionally, nucleoside triphosphate pyrophosphatase that hydrolyzes dTTP and UTP. May have a dual role in cell division arrest and in preventing the incorporation of modified nucleotides into cellular nucleic acids. This Neisseria gonorrhoeae (strain ATCC 700825 / FA 1090) protein is dTTP/UTP pyrophosphatase.